The sequence spans 126 residues: MAKYTNDELLEAFGEMTLVELSEFVKAFEEKFDVEAAAPVAAVAAVAGAAAPAEEEKDEFDVILSAVGDKKIQVIKAVRAITNLGLAEAKALVDGAPKAVLEKAKKEDAEKAKAQLEEAGASVELK.

The protein belongs to the bacterial ribosomal protein bL12 family. Homodimer. Part of the ribosomal stalk of the 50S ribosomal subunit. Forms a multimeric L10(L12)X complex, where L10 forms an elongated spine to which 2 to 4 L12 dimers bind in a sequential fashion. Binds GTP-bound translation factors.

Functionally, forms part of the ribosomal stalk which helps the ribosome interact with GTP-bound translation factors. Is thus essential for accurate translation. This chain is Large ribosomal subunit protein bL12, found in Bifidobacterium longum (strain DJO10A).